Consider the following 316-residue polypeptide: Probable 5-dehydro-4-deoxyglucarate dehydratase (316 aa).

It belongs to the DapA family.

The enzyme catalyses 5-dehydro-4-deoxy-D-glucarate + H(+) = 2,5-dioxopentanoate + CO2 + H2O. Its pathway is carbohydrate acid metabolism; D-glucarate degradation; 2,5-dioxopentanoate from D-glucarate: step 2/2. In Corynebacterium glutamicum (strain R), this protein is Probable 5-dehydro-4-deoxyglucarate dehydratase.